The primary structure comprises 1170 residues: Protein SCAR4 (1170 aa).

Disordered stretches follow at residues 180 to 207 (KLGKDKRLRQSKKKGSHTTIKETPEDSR), 356 to 376 (NDADSPASTESEVKEAGSDDK), 631 to 674 (AAPK…PRDL), 701 to 742 (SYSG…NQTG), 783 to 819 (NQRQESPSETGSANSRTSSDESPPTQNGSVGVQSSPL), 960 to 980 (EESKATEEQSPSGVNGTSDTY), and 1026 to 1046 (HNNPHPAKLEEEEPQVDHPLE). Residues 183 to 195 (KDKRLRQSKKKGS) show a composition bias toward basic residues. A compositionally biased stretch (basic and acidic residues) spans 198–207 (TIKETPEDSR). Residues 356–365 (NDADSPASTE) are compositionally biased toward polar residues. The segment covering 366-376 (SEVKEAGSDDK) has biased composition (basic and acidic residues). Polar residues-rich tracts occupy residues 640–668 (SQDGSSMNPAQSKHISTSEISSENGTLMS), 701–716 (SYSGQEDPQTMSIVSD), 783–818 (NQRQESPSETGSANSRTSSDESPPTQNGSVGVQSSP), and 967–980 (EQSPSGVNGTSDTY). The WH2 domain maps to 1105 to 1123 (ENDSLLEIIRSKSFNLRPA).

This sequence belongs to the SCAR/WAVE family. In terms of assembly, interacts with SPK1. As to expression, expressed in expanding cotyledons, expanding leaves and expanding siliques containing developing embryos. Detected in unopened flower buds and in the expanding tip region of roots. Reduced expression in mature leaves.

Its subcellular location is the cytoplasm. The protein resides in the cytoskeleton. Its function is as follows. Involved in regulation of actin and microtubule organization. Part of a WAVE complex that activates the Arp2/3 complex. Regulates trichome branch positioning and expansion. This chain is Protein SCAR4 (SCAR4), found in Arabidopsis thaliana (Mouse-ear cress).